Consider the following 547-residue polypeptide: Golgi pH regulator homolog (547 aa).

5 helical membrane-spanning segments follow: residues 56–76 (TIAV…FYFL), 92–112 (LSFS…FFEI), 134–154 (INLI…AYGF), 164–184 (LVLL…FPIL), and 200–220 (IGIV…VYVP). Positions 268–305 (NVNNNNNNNNNYDTYNYNNNYNNNSNNNNNNNNSNNNN) are disordered. N290 and N299 each carry an N-linked (GlcNAc...) asparagine glycan. A run of 3 helical transmembrane segments spans residues 427–447 (VTFW…ASSI), 469–489 (NIVL…VLMM), and 517–537 (WFDF…IFMS).

The protein belongs to the Golgi pH regulator (TC 1.A.38) family.

It localises to the membrane. In Dictyostelium discoideum (Social amoeba), this protein is Golgi pH regulator homolog (gpr89).